A 276-amino-acid polypeptide reads, in one-letter code: Hemin import ATP-binding protein HmuV (276 aa).

The 258-residue stretch at 2 to 259 (LTAHHLDVAR…AHIAQCYGFA (258 aa)) folds into the ABC transporter domain. 34–41 (GRNGAGKS) is a binding site for ATP.

The protein belongs to the ABC transporter superfamily. Heme (hemin) importer (TC 3.A.1.14.5) family. The complex is composed of two ATP-binding proteins (HmuV), two transmembrane proteins (HmuU) and a solute-binding protein (HmuT).

The protein resides in the cell inner membrane. Functionally, part of the ABC transporter complex HmuTUV involved in hemin import. Responsible for energy coupling to the transport system. This Burkholderia cenocepacia (strain HI2424) protein is Hemin import ATP-binding protein HmuV.